The chain runs to 1302 residues: Serine-enriched protein (1302 aa).

The region spanning 40-158 (CDVTFLVGDT…IHTGCVTLQP (119 aa)) is the BTB domain. Disordered stretches follow at residues 325-532 (SIDP…RSPT), 575-624 (PIPP…SVMR), 648-685 (FTRA…QKQM), 701-752 (YAKM…SSDE), 834-858 (FTRR…DSND), 1045-1090 (FQRS…RTEN), 1102-1163 (FSRA…GEEE), and 1187-1252 (VLTQ…SASP). Basic residues predominate over residues 337-364 (RQHHRHRHHHQSLPKIRKAKSQSFRTRR). 4 stretches are compositionally biased toward polar residues: residues 378–388 (LTLNTSLTSGN), 410–430 (SPGS…TLRA), 437–449 (SGQL…TQGR), and 472–487 (GLRS…TVRS). Positions 589-623 (KSAEREREAAEAAAREKEKEKEKEAAQPQEKKSVM) are enriched in basic and acidic residues. Low complexity predominate over residues 664-680 (STFSASPAASSTAAKSA). The segment covering 713–723 (KRDDEEKEKQK) has biased composition (basic and acidic residues). Positions 736–748 (DLSQTNADQQVGG) are enriched in polar residues. The span at 836 to 855 (RRSESREPIEPRISEERESD) shows a compositional bias: basic and acidic residues. 2 stretches are compositionally biased toward low complexity: residues 1047 to 1056 (RSGSSCGGRK) and 1107 to 1128 (SPLS…SSGS). The segment covering 1187 to 1207 (VLTQQLSTGSMSTPSGYTNGT) has biased composition (polar residues). Positions 1226–1252 (APLSSCGFSSGSEFEPPSPRRAASASP) are enriched in low complexity.

The polypeptide is Serine-enriched protein (gprs) (Drosophila melanogaster (Fruit fly)).